The sequence spans 144 residues: Large ribosomal subunit protein uL15 (144 aa).

Residues 1–53 form a disordered region; that stretch reads MFLNTIKPGEGAKHAKRRVGRGIGSGLGKTAGRGHKGQKSRSGGFHKVGFEGG. A compositionally biased stretch (gly residues) spans 21–31; it reads RGIGSGLGKTA.

The protein belongs to the universal ribosomal protein uL15 family. In terms of assembly, part of the 50S ribosomal subunit.

In terms of biological role, binds to the 23S rRNA. In Laribacter hongkongensis (strain HLHK9), this protein is Large ribosomal subunit protein uL15.